The primary structure comprises 94 residues: Co-chaperonin GroES (94 aa).

It belongs to the GroES chaperonin family. In terms of assembly, heptamer of 7 subunits arranged in a ring. Interacts with the chaperonin GroEL.

It is found in the cytoplasm. Together with the chaperonin GroEL, plays an essential role in assisting protein folding. The GroEL-GroES system forms a nano-cage that allows encapsulation of the non-native substrate proteins and provides a physical environment optimized to promote and accelerate protein folding. GroES binds to the apical surface of the GroEL ring, thereby capping the opening of the GroEL channel. In Staphylococcus aureus (strain Mu50 / ATCC 700699), this protein is Co-chaperonin GroES.